The sequence spans 306 residues: MEVTFFGTSAGLPTKERNTQAIALNLEPFSNSIWLFDVGEGTQHQILHHSIKLGKVDHIFITHMHGDHIFGLPGLLTSRSFQGGEDKPLTVIGPRGLQQFIETTLRLSESHLNYPITYIEIDNHFTYHHKGFSISAHLLNHGIPSYGYRIESPTTPGTIDVEALKSIGLYPGPKYQEVKSYDNFEHEGQVYNSDDFKGPAKPGPIISIFGDTKPCQSELSIAKDSDVMIHEATYIEGEKTLANNYHHSHIEDVFELIKQANVKRCLITHLSNRYNHENIQLIKQQLKTHEDVPNFEFVKDFDTFII.

His63, His65, Asp67, His68, His141, Asp211, and His269 together coordinate Zn(2+). Asp67 acts as the Proton acceptor in catalysis.

It belongs to the RNase Z family. In terms of assembly, homodimer. It depends on Zn(2+) as a cofactor.

The enzyme catalyses Endonucleolytic cleavage of RNA, removing extra 3' nucleotides from tRNA precursor, generating 3' termini of tRNAs. A 3'-hydroxy group is left at the tRNA terminus and a 5'-phosphoryl group is left at the trailer molecule.. Zinc phosphodiesterase, which displays some tRNA 3'-processing endonuclease activity. Probably involved in tRNA maturation, by removing a 3'-trailer from precursor tRNA. In Staphylococcus haemolyticus (strain JCSC1435), this protein is Ribonuclease Z.